A 473-amino-acid polypeptide reads, in one-letter code: Endoglucanase B (473 aa).

An N-terminal signal peptide occupies residues 1–17 (MKFLNTFSLLSLAIIGS). Residues 18–367 (KAMKNISSKE…GLIKGLGNSI (350 aa)) form a catalytic region. The Proton donor role is filled by Glu-173. Glu-295 acts as the Nucleophile in catalysis. Residues 365–387 (NSIKTRTTIRRTTTTTTSQSQPT) form a linker region. 2 CBM10 domains span residues 391-427 (SCFS…CGIK) and 436-473 (ICWS…CGIY).

It belongs to the glycosyl hydrolase 5 (cellulase A) family.

The enzyme catalyses Endohydrolysis of (1-&gt;4)-beta-D-glucosidic linkages in cellulose, lichenin and cereal beta-D-glucans.. Rate of hydrolysis of cellulo-oligosaccharides increased with increasing chain length from cellotriose to cellopentaose. The chain is Endoglucanase B (CELB) from Neocallimastix patriciarum (Rumen fungus).